Reading from the N-terminus, the 360-residue chain is Cyclin-dependent kinase 10 (360 aa).

One can recognise a Protein kinase domain in the interval 39 to 323 (FEKLNRIGEG…SGDCLESSYF (285 aa)). Residues 45 to 53 (IGEGTYGIV) and Lys-68 each bind ATP. Asp-163 serves as the catalytic Proton acceptor. A Phosphothreonine modification is found at Thr-196. Residues 334 to 360 (LMPTFPHHRNKRAAPAAAEGQSKRCRP) form a disordered region.

The protein belongs to the protein kinase superfamily. CMGC Ser/Thr protein kinase family. CDC2/CDKX subfamily. As to quaternary structure, heterodimer with CCNQ, the interaction is required for kinase activity. Interacts with ETS2. Interacts with PRK2.

The protein localises to the cytoplasm. Its subcellular location is the cytoskeleton. It localises to the cilium basal body. It carries out the reaction L-seryl-[protein] + ATP = O-phospho-L-seryl-[protein] + ADP + H(+). It catalyses the reaction L-threonyl-[protein] + ATP = O-phospho-L-threonyl-[protein] + ADP + H(+). Cyclin-dependent kinase that phosphorylates the transcription factor ETS2 (in vitro) and positively controls its proteasomal degradation (in cells). Involved in the regulation of actin cytoskeleton organization through the phosphorylation of actin dynamics regulators such as PKN2. Is a negative regulator of ciliogenesis through phosphorylation of PKN2 and promotion of RhoA signaling. The polypeptide is Cyclin-dependent kinase 10 (Cdk10) (Mus musculus (Mouse)).